Consider the following 428-residue polypeptide: Ribulose bisphosphate carboxylase (428 aa).

Catalysis depends on K151, which acts as the Proton acceptor. K153 contacts substrate. Mg(2+) contacts are provided by K177, D179, and E180. N6-carboxylysine is present on K177. Residue H270 is the Proton acceptor of the active site. Residues R271, H303, 354-356 (SGG), and 376-379 (QFGG) contribute to the substrate site.

It belongs to the RuBisCO large chain family. Type III subfamily. In terms of assembly, homodimer or homodecamer. In contrast to form I RuBisCO, the form III RuBisCO is composed solely of large subunits. Requires Mg(2+) as cofactor.

It catalyses the reaction 2 (2R)-3-phosphoglycerate + 2 H(+) = D-ribulose 1,5-bisphosphate + CO2 + H2O. It carries out the reaction D-ribulose 1,5-bisphosphate + O2 = 2-phosphoglycolate + (2R)-3-phosphoglycerate + 2 H(+). Its function is as follows. Catalyzes the addition of molecular CO(2) and H(2)O to ribulose 1,5-bisphosphate (RuBP), generating two molecules of 3-phosphoglycerate (3-PGA). Functions in an archaeal AMP degradation pathway, together with AMP phosphorylase and R15P isomerase. In Methanosarcina mazei (strain ATCC BAA-159 / DSM 3647 / Goe1 / Go1 / JCM 11833 / OCM 88) (Methanosarcina frisia), this protein is Ribulose bisphosphate carboxylase.